The following is a 274-amino-acid chain: Mitochondrial S-adenosylmethionine carrier protein (274 aa).

Solcar repeat units lie at residues 4 to 77, 86 to 168, and 177 to 265; these read PGFT…VKSL, FKPV…LKAL, and VDSW…ARSL. 6 helical membrane-spanning segments follow: residues 5–25, 49–69, 85–105, 142–162, 182–202, and 238–258; these read GFTASLVAGGVAGVSVDLILF, IYAGVPSAAVGSFPNAAAFFL, HFKPVKHMLAASTGEVVACLI, RGYKSTVLREIPFSLVQFPLW, SAVCGAFAGGFAAAVTTPLDV, and FAGVLPRMAAISMGGFIFLGA.

Belongs to the mitochondrial carrier (TC 2.A.29) family.

It is found in the mitochondrion inner membrane. It catalyses the reaction S-adenosyl-L-homocysteine(out) + S-adenosyl-L-methionine(in) = S-adenosyl-L-homocysteine(in) + S-adenosyl-L-methionine(out). Its function is as follows. Mitochondrial S-adenosyl-L-methionine/S-adenosyl-L-homocysteine antiporter. Mediates the exchange of cytosolic S-adenosyl-L-methionine, the predominant methyl-group donor for macromolecule methylation processes, for mitochondrial S-adenosylhomocysteine(SAH), a by-product of methylation reactions. This Mus musculus (Mouse) protein is Mitochondrial S-adenosylmethionine carrier protein.